The primary structure comprises 255 residues: Hydroxyacylglutathione hydrolase (255 aa).

Zn(2+) contacts are provided by His56, His58, Asp60, His61, His114, Asp133, and His171.

Belongs to the metallo-beta-lactamase superfamily. Glyoxalase II family. As to quaternary structure, monomer. Zn(2+) is required as a cofactor.

The catalysed reaction is an S-(2-hydroxyacyl)glutathione + H2O = a 2-hydroxy carboxylate + glutathione + H(+). It participates in secondary metabolite metabolism; methylglyoxal degradation; (R)-lactate from methylglyoxal: step 2/2. Its function is as follows. Thiolesterase that catalyzes the hydrolysis of S-D-lactoyl-glutathione to form glutathione and D-lactic acid. This chain is Hydroxyacylglutathione hydrolase, found in Rhodopseudomonas palustris (strain BisB5).